A 320-amino-acid polypeptide reads, in one-letter code: Probable cell division protein WhiA (320 aa).

Positions 282–315 (SLEELGRAARPQISKDAVAGRIRRLLQRAEKAEQ) form a DNA-binding region, H-T-H motif.

It belongs to the WhiA family.

Its function is as follows. Involved in cell division and chromosome segregation. The sequence is that of Probable cell division protein WhiA from Bifidobacterium animalis subsp. lactis (strain AD011).